A 291-amino-acid chain; its full sequence is GCN5-related N-acetyltransferase 4, chloroplastic (291 aa).

The transit peptide at 1–61 directs the protein to the chloroplast; that stretch reads MRSTPLGTTA…PSQINSGACN (61 aa). The N-acetyltransferase domain maps to 76–280; sequence IVVREARLED…RFTFMMKLVN (205 aa). Residues 199–201 and 207–212 contribute to the acetyl-CoA site; these read VAV and RKGIAK. Lys-217 carries the post-translational modification N6-acetyllysine. Acetyl-CoA-binding positions include 238–240 and Tyr-245; that span reads NLG. The Proton donor role is filled by Tyr-245. Residues Lys-254 and Lys-265 each carry the N6-acetyllysine modification.

This sequence belongs to the acetyltransferase family. GNAT subfamily. Oligomer. Post-translationally, autoacetylated at K-217, K-254 and K-265. As to expression, expressed in green tissues.

Its subcellular location is the plastid. The protein localises to the chloroplast. It carries out the reaction an N-terminal L-alpha-aminoacyl-[protein] + acetyl-CoA = N-terminal N(alpha)-acetyl-L-alpha-aminoacyl-[protein] + CoA + H(+). The catalysed reaction is L-lysyl-[protein] + acetyl-CoA = N(6)-acetyl-L-lysyl-[protein] + CoA + H(+). The enzyme catalyses N-terminal L-alanyl-[protein] + acetyl-CoA = N-terminal N(alpha)-acetyl-L-alanyl-[protein] + CoA + H(+). It catalyses the reaction N-terminal L-seryl-[protein] + acetyl-CoA = N-terminal N(alpha)-acetyl-L-seryl-[protein] + CoA + H(+). It carries out the reaction N-terminal L-threonyl-[protein] + acetyl-CoA = N-terminal N(alpha)-acetyl-L-threonyl-[protein] + CoA + H(+). The catalysed reaction is N-terminal L-methionyl-[protein] + acetyl-CoA = N-terminal N(alpha)-acetyl-L-methionyl-[protein] + CoA + H(+). The enzyme catalyses N-terminal L-valyl-[protein] + acetyl-CoA = N-terminal N(alpha)-acetyl-L-valyl-[protein] + CoA + H(+). It catalyses the reaction N-terminal glycyl-[protein] + acetyl-CoA = N-terminal N(alpha)-acetylglycyl-[protein] + CoA + H(+). Its function is as follows. Protein acetyltransferase with dual specificity triggering both N-alpha-acetylation (NTA), with a large spectrum of modified N-termini, including methionine, alanine, serine, threonine and to a lower extent glycine and valine as substrates, and epsilon-lysine acetylation (KA) of several plastid proteins. This Arabidopsis thaliana (Mouse-ear cress) protein is GCN5-related N-acetyltransferase 4, chloroplastic.